The chain runs to 121 residues: Large ribosomal subunit protein uL18 (121 aa).

Belongs to the universal ribosomal protein uL18 family. Part of the 50S ribosomal subunit; part of the 5S rRNA/L5/L18/L25 subcomplex. Contacts the 5S and 23S rRNAs.

In terms of biological role, this is one of the proteins that bind and probably mediate the attachment of the 5S RNA into the large ribosomal subunit, where it forms part of the central protuberance. The protein is Large ribosomal subunit protein uL18 of Polaromonas sp. (strain JS666 / ATCC BAA-500).